The chain runs to 359 residues: MPAHLLQEEISSSYTTTTTITAPSSRVLQNGGGKLEKTPQYVEEDIRPEMKDDIYDPTYQDKEGPRPKLEYVWRNIILMSLLHLGALYGIILIPTCKIYTLLWAFAYYLLSAVGVTAGAHRLWSHRTYKARLPLRVFLIIANTMAFQNDVYEWARDHRAHHKFSETDADPHNSRRGFFFSHVGWLLVRKHPAVKEKGGLLNMSDLKAEKLVMFQRRYYKPGILLMCFILPTIVPWYCWGEAFPQSLFVATFLRYAIVLNATWLVNSAAHLYGYRPYDKTISPRENILVSLGAVGEGFHNYHHTFPYDYSASEYRWHINLTTFFIDCMAALGLAYDRKKVSKAAILARIKRTGDESYKSG.

Over 1–72 the chain is Cytoplasmic; that stretch reads MPAHLLQEEI…EGPRPKLEYV (72 aa). The chain crosses the membrane as a helical span at residues 73–93; the sequence is WRNIILMSLLHLGALYGIILI. A substrate-binding site is contributed by asparagine 75. The Lumenal portion of the chain corresponds to 94–97; that stretch reads PTCK. A helical membrane pass occupies residues 98 to 118; the sequence is IYTLLWAFAYYLLSAVGVTAG. The Cytoplasmic portion of the chain corresponds to 119–217; it reads AHRLWSHRTY…EKLVMFQRRY (99 aa). Residues histidine 120 and histidine 125 each contribute to the Fe cation site. A Histidine box-1 motif is present at residues 120–125; it reads HRLWSH. 3 residues coordinate substrate: asparagine 148, arginine 155, and aspartate 156. 3 residues coordinate Fe cation: histidine 157, histidine 160, and histidine 161. A Histidine box-2 motif is present at residues 157–161; sequence HRAHH. The substrate site is built by arginine 188 and lysine 189. Residue serine 203 is modified to Phosphoserine. Residues 218 to 237 traverse the membrane as a helical segment; that stretch reads YKPGILLMCFILPTIVPWYC. The Lumenal segment spans residues 238–241; it reads WGEA. The chain crosses the membrane as a helical span at residues 242–263; that stretch reads FPQSLFVATFLRYAIVLNATWL. Tryptophan 262 is a substrate binding site. At 264 to 359 the chain is on the cytoplasmic side; sequence VNSAAHLYGY…RTGDESYKSG (96 aa). Fe cation is bound by residues histidine 269, histidine 298, histidine 301, and histidine 302. Residues 298–302 carry the Histidine box-3 motif; sequence HNYHH.

This sequence belongs to the fatty acid desaturase type 1 family. Fe(2+) is required as a cofactor.

It localises to the endoplasmic reticulum membrane. The enzyme catalyses octadecanoyl-CoA + 2 Fe(II)-[cytochrome b5] + O2 + 2 H(+) = (9Z)-octadecenoyl-CoA + 2 Fe(III)-[cytochrome b5] + 2 H2O. It catalyses the reaction hexadecanoyl-CoA + 2 Fe(II)-[cytochrome b5] + O2 + 2 H(+) = (9Z)-hexadecenoyl-CoA + 2 Fe(III)-[cytochrome b5] + 2 H2O. Its function is as follows. Stearoyl-CoA desaturase that utilizes O(2) and electrons from reduced cytochrome b5 to introduce the first double bond into saturated fatty acyl-CoA substrates. Catalyzes the insertion of a cis double bond at the delta-9 position into fatty acyl-CoA substrates including palmitoyl-CoA and stearoyl-CoA. Gives rise to a mixture of 16:1 and 18:1 unsaturated fatty acids. Plays an important role in lipid biosynthesis. Plays an important role in regulating the expression of genes that are involved in lipogenesis and in regulating mitochondrial fatty acid oxidation. Plays an important role in body energy homeostasis. Contributes to the biosynthesis of membrane phospholipids, cholesterol esters and triglycerides. The protein is Stearoyl-CoA desaturase (SCD) of Sus scrofa (Pig).